The sequence spans 364 residues: DNA replication and repair protein RecF (364 aa).

30 to 37 (GNNGQGKT) is a binding site for ATP.

The protein belongs to the RecF family.

Its subcellular location is the cytoplasm. Functionally, the RecF protein is involved in DNA metabolism; it is required for DNA replication and normal SOS inducibility. RecF binds preferentially to single-stranded, linear DNA. It also seems to bind ATP. The protein is DNA replication and repair protein RecF of Geobacter sp. (strain M21).